We begin with the raw amino-acid sequence, 264 residues long: Indole-3-glycerol phosphate synthase (264 aa).

It belongs to the TrpC family.

It catalyses the reaction 1-(2-carboxyphenylamino)-1-deoxy-D-ribulose 5-phosphate + H(+) = (1S,2R)-1-C-(indol-3-yl)glycerol 3-phosphate + CO2 + H2O. It functions in the pathway amino-acid biosynthesis; L-tryptophan biosynthesis; L-tryptophan from chorismate: step 4/5. This chain is Indole-3-glycerol phosphate synthase, found in Azoarcus sp. (strain BH72).